Consider the following 1411-residue polypeptide: MPTSKLQANMSYREVIPRNLSPAEWIEVKINTGTQSTLQDLKTFETSGGYCYKNTKNVQTRNRFIYWRTYQDVLELSEVSLDISLQRNHLRLRFTDSAVLNVSLTEQGTSVTLLVVTVSSVHRYVFPLKVAGQEGGAASPEDLLSQSIFYDVNDKINDPSTYYVTDGFGTMPNAAVSYLTQDSQSAYFAVAYQSKLLLHVMKCSTGHTITHEIKEPKLMPWFLSNLKGALTGRSETLEAATSMAFSEIGGEIFILVLYRNNELRLWSVDNLQTVASINCSTELGQDSAAQGPQNSQLRKISDQNFCLFLSHNSRAEFICVSIMPDADDASVINLVQNMVPAPQTDLVDFDATSSHIWALWSNAEGDFHVSAAYFASNNAIKWVSAALEPPPDRYCLTMEQGVDPRETYCSYIFHPGRFDRNVIAKALYMFRRVNLQFDVKQLSMSVLKEQVCQAVEDEIQNELKDFVVTDEEYLEISTRLWDRFYSCCEQYHIKLSEPTGLAVLGGMDAVCLVRRQSFALLRPCEVLEHLLLIGEHNDEVATYVAPLFRNDPEMAKGFVELMNVVTLLDKLISEDIKIELDKQLYQRESPVEVISKLVARISMIDDNGPILPSNCVRQIQQKLQNIPNLEPALEMLLDVLCMIDPDEPPHDYSLSTRFLQSSGALMGSEYGLSILSETVKQMAMIRFSVCRNLLVLQYMAYGQNEMESENVLTNLNYLNSYYTLVWIAETPISSSTPAGFEASIQRLSRAQLFSGYNRPYSSHLKHNGNDQTTLLRLFLESKGLFSALTMLLKHDSLSLDSEQLNLRQSLLQLVGYINKMLWPGSPIYVFPEWLFGTCHHIIVQDYVRILSNWCSVQKHARRFMLAVSLLDCGEAHKAVHLFHEAESGIVEDDFLFEHVLKNTPLYGKLQNSVSRGDTISPEDTKLAIVHYYLKVIQLFEQHSALDYIIQLADMAIRVLQPDDPQLPMFQSIVFNNHLQLGHYVEAYTALVNNADISRRKDCLRQLVITLFQNKCLPLLMQFSYIGLQDEFESIVESRARSMSIDQNEVYNFLYAFHTNKGNMRKASTVMYEQAMRFQVDSDAPNALEKRCSSLLICLNCLHLVDSRYRWIAKPVLGDEQVITIDQDNDDGEPKCDEDKRGQEVVVLELADIRRELVHAEALRELSFYRKDTAAYERATPEELSYLLASSGLYTAALKLSRGHSFSVLPIFESLTSACVAATEDKSSDAWNWLQNNDMADLPHRSNAADMAWTLLQKLVVDNEAKDSTLIRKSVVQRLLGLNAFLPQWLINSYKLSHSRELLHLLVKHNRLLEAADLGCEIIAGMLGAGSEYFEFKHAVNIANPQLCFPISTIDLLLHGLKINGKDDLDYEMAYFKLEEEVQRYIETIKRTTDDKMSMAVLQMRTDLQEER.

Part of the nuclear pore complex. Interacts with Nup98.

The protein localises to the nucleus. It localises to the nuclear pore complex. Functionally, functions as a component of the nuclear pore complex (NPC). Involved in poly(A)+ RNA transport. Required for nuclear import of Mad. May play a role in double strand break DNA repair. Essential for nephrocyte development. This Drosophila melanogaster (Fruit fly) protein is Nuclear pore complex protein Nup160 homolog (Nup160).